Here is a 229-residue protein sequence, read N- to C-terminus: Ribonuclease 3 (229 aa).

Positions 7-132 (LRAFESRIGH…VIAAVYLDAG (126 aa)) constitute an RNase III domain. Glu45 lines the Mg(2+) pocket. Residue Asp49 is part of the active site. Mg(2+) contacts are provided by Asp118 and Glu121. The active site involves Glu121. The 70-residue stretch at 157-226 (DAKTALQEWA…ARALLARMEA (70 aa)) folds into the DRBM domain.

This sequence belongs to the ribonuclease III family. As to quaternary structure, homodimer. Mg(2+) serves as cofactor.

Its subcellular location is the cytoplasm. The catalysed reaction is Endonucleolytic cleavage to 5'-phosphomonoester.. Digests double-stranded RNA. Involved in the processing of primary rRNA transcript to yield the immediate precursors to the large and small rRNAs (23S and 16S). Processes some mRNAs, and tRNAs when they are encoded in the rRNA operon. Processes pre-crRNA and tracrRNA of type II CRISPR loci if present in the organism. The chain is Ribonuclease 3 from Cereibacter sphaeroides (strain ATCC 17025 / ATH 2.4.3) (Rhodobacter sphaeroides).